A 48-amino-acid polypeptide reads, in one-letter code: Large ribosomal subunit protein uL14 (48 aa).

It belongs to the universal ribosomal protein uL14 family.

The chain is Large ribosomal subunit protein uL14 (RPL23) from Onchocerca volvulus.